We begin with the raw amino-acid sequence, 35 residues long: Photosystem II reaction center protein T (35 aa).

Residues 3–23 traverse the membrane as a helical segment; that stretch reads ALVYTFLLVGTLGIIFFAIFF.

Belongs to the PsbT family. PSII is composed of 1 copy each of membrane proteins PsbA, PsbB, PsbC, PsbD, PsbE, PsbF, PsbH, PsbI, PsbJ, PsbK, PsbL, PsbM, PsbT, PsbY, PsbZ, Psb30/Ycf12, at least 3 peripheral proteins of the oxygen-evolving complex and a large number of cofactors. It forms dimeric complexes.

It is found in the plastid. The protein localises to the chloroplast thylakoid membrane. Its function is as follows. Found at the monomer-monomer interface of the photosystem II (PS II) dimer, plays a role in assembly and dimerization of PSII. PSII is a light-driven water plastoquinone oxidoreductase, using light energy to abstract electrons from H(2)O, generating a proton gradient subsequently used for ATP formation. The protein is Photosystem II reaction center protein T of Staurastrum punctulatum (Green alga).